The following is a 226-amino-acid chain: Ribose-5-phosphate isomerase A (226 aa).

Residues 29–32 (TGST), 84–87 (DGAD), and 97–100 (KGGG) each bind substrate. The active-site Proton acceptor is the Glu106. Substrate is bound at residue Lys124.

It belongs to the ribose 5-phosphate isomerase family. Homodimer.

The catalysed reaction is aldehydo-D-ribose 5-phosphate = D-ribulose 5-phosphate. The protein operates within carbohydrate degradation; pentose phosphate pathway; D-ribose 5-phosphate from D-ribulose 5-phosphate (non-oxidative stage): step 1/1. Catalyzes the reversible conversion of ribose-5-phosphate to ribulose 5-phosphate. This chain is Ribose-5-phosphate isomerase A, found in Methanothermobacter thermautotrophicus (strain ATCC 29096 / DSM 1053 / JCM 10044 / NBRC 100330 / Delta H) (Methanobacterium thermoautotrophicum).